A 303-amino-acid chain; its full sequence is 4-diphosphocytidyl-2-C-methyl-D-erythritol kinase (303 aa).

Lys18 is an active-site residue. An ATP-binding site is contributed by 111 to 121 (PVASGIGGGSA). Residue Asp153 is part of the active site.

Belongs to the GHMP kinase family. IspE subfamily.

It catalyses the reaction 4-CDP-2-C-methyl-D-erythritol + ATP = 4-CDP-2-C-methyl-D-erythritol 2-phosphate + ADP + H(+). It functions in the pathway isoprenoid biosynthesis; isopentenyl diphosphate biosynthesis via DXP pathway; isopentenyl diphosphate from 1-deoxy-D-xylulose 5-phosphate: step 3/6. Catalyzes the phosphorylation of the position 2 hydroxy group of 4-diphosphocytidyl-2C-methyl-D-erythritol. This Sinorhizobium medicae (strain WSM419) (Ensifer medicae) protein is 4-diphosphocytidyl-2-C-methyl-D-erythritol kinase.